The chain runs to 73 residues: Large ribosomal subunit protein bL31 (73 aa).

Zn(2+) is bound by residues Cys-16, Cys-18, Cys-36, and Cys-39.

The protein belongs to the bacterial ribosomal protein bL31 family. Type A subfamily. Part of the 50S ribosomal subunit. Zn(2+) serves as cofactor.

In terms of biological role, binds the 23S rRNA. This chain is Large ribosomal subunit protein bL31, found in Myxococcus xanthus (strain DK1622).